A 77-amino-acid polypeptide reads, in one-letter code: RNA-binding protein Hfq (77 aa).

The Sm domain maps to 10 to 70 (DAFLNHVRKT…ISTVMPAQPI (61 aa)).

The protein belongs to the Hfq family. As to quaternary structure, homohexamer.

In terms of biological role, RNA chaperone that binds small regulatory RNA (sRNAs) and mRNAs to facilitate mRNA translational regulation in response to envelope stress, environmental stress and changes in metabolite concentrations. Also binds with high specificity to tRNAs. In Jannaschia sp. (strain CCS1), this protein is RNA-binding protein Hfq.